A 610-amino-acid polypeptide reads, in one-letter code: E3 ubiquitin-protein ligase hrd-1 (610 aa).

The N-terminal stretch at 1–23 (MRVSAGLMIGGSCVATAATILNA) is a signal peptide. Residues 24 to 41 (FLINKQFYPSIVYLSKSN) lie on the Lumenal side of the membrane. A helical transmembrane segment spans residues 42–62 (ASMAVIYVQGIVLVYLMFQLL). At 63-99 (KSILFGDLRAAEAEHLSERTWHAVLETCLAFTVFRDD) the chain is on the cytoplasmic side. Residues 100-120 (FSAIFVMQFIGLLFIKCFHWL) form a helical membrane-spanning segment. At 121–144 (ADDRVDMMERSPVITLRFHLRMMT) the chain is on the lumenal side. A helical transmembrane segment spans residues 145–165 (VLAALGFADSYFVSSAYFTTI). At 166–170 (TRGAS) the chain is on the cytoplasmic side. The chain crosses the membrane as a helical span at residues 171–191 (AQIVFGFEYAILLALVLHVTI). Residues 192 to 215 (KYLLHMHDLRNPQSWDNKAVYLLY) are Lumenal-facing. A helical membrane pass occupies residues 216–236 (AELFINLIRCLLYGFFAVVML). Topologically, residues 237 to 610 (RVHTFPLFSV…ARLLGENANQ (374 aa)) are cytoplasmic. Residues 292–333 (CIICREEMTVDASPKRLPCSHVFHAHCLRSWFQRQQTCPTCR) form an RING-type; atypical zinc finger. 3 disordered regions span residues 386 to 408 (QPAG…GPFP), 452 to 480 (VNTT…LRRM), and 521 to 610 (RPVV…NANQ). Residues 452-474 (VNTTQGTSSETPPVNPSYSQLST) show a composition bias toward polar residues. Over residues 560–589 (TESPSTSSTAPSTSSPVTASSTPTTSSTRT) the composition is skewed to low complexity.

Belongs to the HRD1 family. In terms of assembly, homodimer.

The protein resides in the endoplasmic reticulum membrane. The enzyme catalyses S-ubiquitinyl-[E2 ubiquitin-conjugating enzyme]-L-cysteine + [acceptor protein]-L-lysine = [E2 ubiquitin-conjugating enzyme]-L-cysteine + N(6)-ubiquitinyl-[acceptor protein]-L-lysine.. It functions in the pathway protein modification; protein ubiquitination. Functionally, acts as an E3 ubiquitin-protein ligase which accepts ubiquitin specifically from endoplasmic reticulum-associated ubc-7 E2 ligase and transfers it to substrates, promoting their degradation. Component of the endoplasmic reticulum quality control (ERQC) system, which is also called the ER-associated degradation (ERAD) system, involved in ubiquitin-dependent degradation of misfolded endoplasmic reticulum proteins. Also promotes the degradation of normal but naturally short-lived proteins. Protects cells from ER stress-induced apoptosis. Thought to play a role together with hsp-3 in developmental growth and function of intestinal cells and to play a role together with hsp-4 in gonad formation. Plays a key role in the degradation of the potassium channel slo-1, perhaps acting directly, in targeting slo-1 to the ER-associated degradation pathway (ERAD), and also indirectly, via activation of the transcription factor skn-1, which mediates proteasomal homeostasis. This chain is E3 ubiquitin-protein ligase hrd-1 (sel-11), found in Caenorhabditis elegans.